Consider the following 359-residue polypeptide: DNA integrity scanning protein DisA (359 aa).

The region spanning 7–146 is the DAC domain; sequence DDIFRATLAA…GRRYVLDGSA (140 aa). Residues glycine 74, leucine 92, and 105–109 each bind ATP; that span reads TRHRT.

Belongs to the DisA family. As to quaternary structure, homooctamer. Mg(2+) serves as cofactor.

The enzyme catalyses 2 ATP = 3',3'-c-di-AMP + 2 diphosphate. Participates in a DNA-damage check-point that is active prior to asymmetric division when DNA is damaged. DisA forms globular foci that rapidly scan along the chromosomes during sporulation, searching for lesions. When a lesion is present, DisA pauses at the lesion site. This triggers a cellular response that culminates in a temporary block in sporulation initiation. Its function is as follows. Also has diadenylate cyclase activity, catalyzing the condensation of 2 ATP molecules into cyclic di-AMP (c-di-AMP). c-di-AMP acts as a signaling molecule that couples DNA integrity with progression of sporulation. The rise in c-di-AMP level generated by DisA while scanning the chromosome, operates as a positive signal that advances sporulation; upon encountering a lesion, the DisA focus arrests at the damaged site and halts c-di-AMP synthesis. This Frankia casuarinae (strain DSM 45818 / CECT 9043 / HFP020203 / CcI3) protein is DNA integrity scanning protein DisA.